Here is a 425-residue protein sequence, read N- to C-terminus: Gamma-glutamyl phosphate reductase (425 aa).

Belongs to the gamma-glutamyl phosphate reductase family.

It is found in the cytoplasm. The enzyme catalyses L-glutamate 5-semialdehyde + phosphate + NADP(+) = L-glutamyl 5-phosphate + NADPH + H(+). It participates in amino-acid biosynthesis; L-proline biosynthesis; L-glutamate 5-semialdehyde from L-glutamate: step 2/2. Its function is as follows. Catalyzes the NADPH-dependent reduction of L-glutamate 5-phosphate into L-glutamate 5-semialdehyde and phosphate. The product spontaneously undergoes cyclization to form 1-pyrroline-5-carboxylate. The sequence is that of Gamma-glutamyl phosphate reductase from Opitutus terrae (strain DSM 11246 / JCM 15787 / PB90-1).